The following is a 193-amino-acid chain: NADH-quinone oxidoreductase subunit B (193 aa).

The segment covering 1-11 (MGLTGTNTTLV) has biased composition (polar residues). Residues 1-23 (MGLTGTNTTLVAPQPKGILDPRT) are disordered. [4Fe-4S] cluster is bound by residues C72, C73, C137, and C167.

The protein belongs to the complex I 20 kDa subunit family. NDH-1 is composed of 14 different subunits. Subunits NuoB, C, D, E, F, and G constitute the peripheral sector of the complex. [4Fe-4S] cluster serves as cofactor.

The protein localises to the cell inner membrane. It carries out the reaction a quinone + NADH + 5 H(+)(in) = a quinol + NAD(+) + 4 H(+)(out). In terms of biological role, NDH-1 shuttles electrons from NADH, via FMN and iron-sulfur (Fe-S) centers, to quinones in the respiratory chain. Couples the redox reaction to proton translocation (for every two electrons transferred, four hydrogen ions are translocated across the cytoplasmic membrane), and thus conserves the redox energy in a proton gradient. The protein is NADH-quinone oxidoreductase subunit B of Brucella canis (strain ATCC 23365 / NCTC 10854 / RM-666).